Reading from the N-terminus, the 380-residue chain is Queuine tRNA-ribosyltransferase (380 aa).

Residue Asp95 is the Proton acceptor of the active site. Residues Asp95–Phe99, Asp149, Gln192, and Gly219 each bind substrate. Positions Gly250 to Ala256 are RNA binding. The active-site Nucleophile is the Asp269. An RNA binding; important for wobble base 34 recognition region spans residues Thr274 to Arg278. Cys307, Cys309, Cys312, and His338 together coordinate Zn(2+).

The protein belongs to the queuine tRNA-ribosyltransferase family. As to quaternary structure, homodimer. Within each dimer, one monomer is responsible for RNA recognition and catalysis, while the other monomer binds to the replacement base PreQ1. Zn(2+) is required as a cofactor.

It catalyses the reaction 7-aminomethyl-7-carbaguanine + guanosine(34) in tRNA = 7-aminomethyl-7-carbaguanosine(34) in tRNA + guanine. It participates in tRNA modification; tRNA-queuosine biosynthesis. Catalyzes the base-exchange of a guanine (G) residue with the queuine precursor 7-aminomethyl-7-deazaguanine (PreQ1) at position 34 (anticodon wobble position) in tRNAs with GU(N) anticodons (tRNA-Asp, -Asn, -His and -Tyr). Catalysis occurs through a double-displacement mechanism. The nucleophile active site attacks the C1' of nucleotide 34 to detach the guanine base from the RNA, forming a covalent enzyme-RNA intermediate. The proton acceptor active site deprotonates the incoming PreQ1, allowing a nucleophilic attack on the C1' of the ribose to form the product. After dissociation, two additional enzymatic reactions on the tRNA convert PreQ1 to queuine (Q), resulting in the hypermodified nucleoside queuosine (7-(((4,5-cis-dihydroxy-2-cyclopenten-1-yl)amino)methyl)-7-deazaguanosine). This Pediococcus pentosaceus (strain ATCC 25745 / CCUG 21536 / LMG 10740 / 183-1w) protein is Queuine tRNA-ribosyltransferase.